A 656-amino-acid chain; its full sequence is tRNA(Met) cytidine acetyltransferase TmcA (656 aa).

Residues Gln-145, 167-176, and Arg-291 each bind ATP; that span reads GRGKSALLGM. The N-acetyltransferase domain maps to 368-542; sequence SEGKYNRQFF…SGCYSAIALK (175 aa). Acetyl-CoA-binding positions include 474–476, 481–487, and Glu-510; these read IAV and QQKGIGQ.

Belongs to the RNA cytidine acetyltransferase family. TmcA subfamily.

It is found in the cytoplasm. It catalyses the reaction cytidine(34) in elongator tRNA(Met) + acetyl-CoA + ATP + H2O = N(4)-acetylcytidine(34) in elongator tRNA(Met) + ADP + phosphate + CoA + H(+). Functionally, catalyzes the formation of N(4)-acetylcytidine (ac(4)C) at the wobble position of tRNA(Met), by using acetyl-CoA as an acetyl donor and ATP (or GTP). The chain is tRNA(Met) cytidine acetyltransferase TmcA from Haemophilus influenzae (strain ATCC 51907 / DSM 11121 / KW20 / Rd).